A 286-amino-acid chain; its full sequence is ATP synthase gamma chain (286 aa).

This sequence belongs to the ATPase gamma chain family. In terms of assembly, F-type ATPases have 2 components, CF(1) - the catalytic core - and CF(0) - the membrane proton channel. CF(1) has five subunits: alpha(3), beta(3), gamma(1), delta(1), epsilon(1). CF(0) has three main subunits: a, b and c.

It localises to the cell inner membrane. In terms of biological role, produces ATP from ADP in the presence of a proton gradient across the membrane. The gamma chain is believed to be important in regulating ATPase activity and the flow of protons through the CF(0) complex. In Shewanella amazonensis (strain ATCC BAA-1098 / SB2B), this protein is ATP synthase gamma chain.